Here is a 368-residue protein sequence, read N- to C-terminus: Chorismate synthase (368 aa).

Residue Arg46 coordinates NADP(+). Residues 123–125 (RSS), 240–241 (NA), Gly285, 300–304 (KPTPT), and Arg326 each bind FMN.

This sequence belongs to the chorismate synthase family. As to quaternary structure, homotetramer. It depends on FMNH2 as a cofactor.

It catalyses the reaction 5-O-(1-carboxyvinyl)-3-phosphoshikimate = chorismate + phosphate. The protein operates within metabolic intermediate biosynthesis; chorismate biosynthesis; chorismate from D-erythrose 4-phosphate and phosphoenolpyruvate: step 7/7. In terms of biological role, catalyzes the anti-1,4-elimination of the C-3 phosphate and the C-6 proR hydrogen from 5-enolpyruvylshikimate-3-phosphate (EPSP) to yield chorismate, which is the branch point compound that serves as the starting substrate for the three terminal pathways of aromatic amino acid biosynthesis. This reaction introduces a second double bond into the aromatic ring system. The protein is Chorismate synthase of Porphyromonas gingivalis (strain ATCC BAA-308 / W83).